Here is a 433-residue protein sequence, read N- to C-terminus: 23S rRNA (uracil(1939)-C(5))-methyltransferase RlmD (433 aa).

One can recognise a TRAM domain in the interval 10–68 (RTTTRQIITVSVNDLDSFGQGVARHNGKTLFIPGLLPQENAEVTVTEDKKQYARAKVVR). 2 interaction with RNA regions span residues 23–40 (DLDSFGQGVARHNGKTLF) and 58–63 (KKQYAR). [4Fe-4S] cluster-binding residues include C81, C87, C90, and C162. Residues Q265, F294, N299, E315, N342, and D363 each coordinate S-adenosyl-L-methionine. Catalysis depends on C389, which acts as the Nucleophile.

Belongs to the class I-like SAM-binding methyltransferase superfamily. RNA M5U methyltransferase family. RlmD subfamily.

The catalysed reaction is uridine(1939) in 23S rRNA + S-adenosyl-L-methionine = 5-methyluridine(1939) in 23S rRNA + S-adenosyl-L-homocysteine + H(+). Functionally, catalyzes the formation of 5-methyl-uridine at position 1939 (m5U1939) in 23S rRNA. This chain is 23S rRNA (uracil(1939)-C(5))-methyltransferase RlmD, found in Escherichia coli (strain K12).